Reading from the N-terminus, the 584-residue chain is Major capsid protein (584 aa).

The protein belongs to the NCLDV major capsid protein family.

The protein resides in the virion. In terms of biological role, major protein of the capsid. This Haptolina ericina (CeV01) protein is Major capsid protein (MCP).